A 303-amino-acid chain; its full sequence is MTWQFPDRLSTNSALPGPAFSGQPAVDLSSFADFLRRQAPELLPAALGGAQSGPASSSGGTGQLPHGTTIVALKYPGGVVLAGDRRSTQGNMIAGRDVKKVYITDDYTATGIAGTAAIAVEFARLYAVELEHYEKLEGVPLTFAGKVNRLAIMVRGNLAAAMQGLVALPLLAGYDIDAPDPEGAGRIVSFDAAGGWNLEEEGYQSVGSGSIFAKSSMKKLYSQVVDADSAVRVAIEALYDAADDDSATGGPDLVRGIYPTAVTIGAEGALEVPESRIAELAREVIQSRSRADTFGPDAAGGDK.

The propeptide at 1 to 67 (MTWQFPDRLS…SGGTGQLPHG (67 aa)) is removed in mature form; by autocatalysis. Thr-68 serves as the catalytic Nucleophile.

The protein belongs to the peptidase T1B family. As to quaternary structure, the 20S proteasome core is composed of 14 alpha and 14 beta subunits that assemble into four stacked heptameric rings, resulting in a barrel-shaped structure. The two inner rings, each composed of seven catalytic beta subunits, are sandwiched by two outer rings, each composed of seven alpha subunits. The catalytic chamber with the active sites is on the inside of the barrel. Has a gated structure, the ends of the cylinder being occluded by the N-termini of the alpha-subunits. Is capped by the proteasome-associated ATPase, ARC.

It is found in the cytoplasm. The catalysed reaction is Cleavage of peptide bonds with very broad specificity.. It participates in protein degradation; proteasomal Pup-dependent pathway. The formation of the proteasomal ATPase ARC-20S proteasome complex, likely via the docking of the C-termini of ARC into the intersubunit pockets in the alpha-rings, may trigger opening of the gate for substrate entry. Interconversion between the open-gate and close-gate conformations leads to a dynamic regulation of the 20S proteasome proteolysis activity. Functionally, component of the proteasome core, a large protease complex with broad specificity involved in protein degradation. In Mycolicibacterium paratuberculosis (strain ATCC BAA-968 / K-10) (Mycobacterium paratuberculosis), this protein is Proteasome subunit beta.